The chain runs to 380 residues: S-phase entry cyclin-6 (380 aa).

Residues 63–91 (PRGKLQRDSTHLEKTRKRQLSNDSTDPIE) form a disordered region.

The protein belongs to the cyclin family. Cyclin AB subfamily.

Involved in G1/S and or S phase progression. Interacts with CDC28. The sequence is that of S-phase entry cyclin-6 (CLB6) from Saccharomyces cerevisiae (strain ATCC 204508 / S288c) (Baker's yeast).